A 171-amino-acid chain; its full sequence is bZIP transcription factor 2 (171 aa).

The segment covering 1–24 has biased composition (low complexity); that stretch reads MASSSSTYRSSSSSDGGNNNPSDS. Residues 1–54 are disordered; the sequence is MASSSSTYRSSSSSDGGNNNPSDSVVTVDERKRKRMLSNRESARRSRMRKQKHV. The bZIP domain occupies 29 to 92; sequence DERKRKRMLS…MKIQAENSVL (64 aa). Positions 31-52 are basic motif; that stretch reads RKRKRMLSNRESARRSRMRKQK. Residues 57-71 form a leucine-zipper region; it reads LTAQINQLSNDNRQI.

Forms heterodimers with BZIP9, BZIP10, BZIP25 and BZIP63. Component of a ternary complex composed of BZIP2-BZIP63 heterodimer and KIN10.

The protein resides in the nucleus. Transcription factor that binds to specific DNA sequences in target gene promoters. BZIP2-BZIP63-KIN10 complex binds to the ETFQO promoter to up-regulate its transcription. The chain is bZIP transcription factor 2 from Arabidopsis thaliana (Mouse-ear cress).